The chain runs to 145 residues: D-aminoacyl-tRNA deacylase (145 aa).

The short motif at 137–138 (GP) is the Gly-cisPro motif, important for rejection of L-amino acids element.

It belongs to the DTD family. Homodimer.

The protein resides in the cytoplasm. It carries out the reaction glycyl-tRNA(Ala) + H2O = tRNA(Ala) + glycine + H(+). It catalyses the reaction a D-aminoacyl-tRNA + H2O = a tRNA + a D-alpha-amino acid + H(+). Functionally, an aminoacyl-tRNA editing enzyme that deacylates mischarged D-aminoacyl-tRNAs. Also deacylates mischarged glycyl-tRNA(Ala), protecting cells against glycine mischarging by AlaRS. Acts via tRNA-based rather than protein-based catalysis; rejects L-amino acids rather than detecting D-amino acids in the active site. By recycling D-aminoacyl-tRNA to D-amino acids and free tRNA molecules, this enzyme counteracts the toxicity associated with the formation of D-aminoacyl-tRNA entities in vivo and helps enforce protein L-homochirality. This chain is D-aminoacyl-tRNA deacylase, found in Francisella tularensis subsp. novicida (strain U112).